The chain runs to 227 residues: Mitochondrial inner membrane protease ATP23 (227 aa).

A divalent metal cation is bound at residue H124. The active site involves E125. A divalent metal cation is bound at residue H128.

Belongs to the peptidase M76 family. Interacts with ATP6.

The protein localises to the mitochondrion inner membrane. In terms of biological role, has a dual role in the assembly of mitochondrial ATPase. Acts as a protease that removes the N-terminal 10 residues of mitochondrial ATPase CF(0) subunit 6 (ATP6) at the intermembrane space side. Also involved in the correct assembly of the membrane-embedded ATPase CF(0) particle, probably mediating association of ATP6 with the subunit 9 ring. The sequence is that of Mitochondrial inner membrane protease ATP23 (ATP23) from Saccharomyces cerevisiae (strain YJM789) (Baker's yeast).